The primary structure comprises 123 residues: Ribonuclease P protein component (123 aa).

The protein belongs to the RnpA family. In terms of assembly, consists of a catalytic RNA component (M1 or rnpB) and a protein subunit.

It catalyses the reaction Endonucleolytic cleavage of RNA, removing 5'-extranucleotides from tRNA precursor.. In terms of biological role, RNaseP catalyzes the removal of the 5'-leader sequence from pre-tRNA to produce the mature 5'-terminus. It can also cleave other RNA substrates such as 4.5S RNA. The protein component plays an auxiliary but essential role in vivo by binding to the 5'-leader sequence and broadening the substrate specificity of the ribozyme. This Streptomyces griseus subsp. griseus (strain JCM 4626 / CBS 651.72 / NBRC 13350 / KCC S-0626 / ISP 5235) protein is Ribonuclease P protein component.